The following is a 185-amino-acid chain: Potassium-transporting ATPase KdpC subunit (185 aa).

Residues 8–28 traverse the membrane as a helical segment; that stretch reads LGLVLIMFVLCGFIFPLTVTA. Positions 113–132 are disordered; the sequence is GQKLSSDAVTTSGSGLDPDI. Polar residues predominate over residues 114–126; the sequence is QKLSSDAVTTSGS.

Belongs to the KdpC family. In terms of assembly, the system is composed of three essential subunits: KdpA, KdpB and KdpC.

The protein resides in the cell membrane. In terms of biological role, part of the high-affinity ATP-driven potassium transport (or Kdp) system, which catalyzes the hydrolysis of ATP coupled with the electrogenic transport of potassium into the cytoplasm. This subunit acts as a catalytic chaperone that increases the ATP-binding affinity of the ATP-hydrolyzing subunit KdpB by the formation of a transient KdpB/KdpC/ATP ternary complex. This Staphylococcus haemolyticus (strain JCSC1435) protein is Potassium-transporting ATPase KdpC subunit.